The chain runs to 149 residues: MEKTFIMLKPDAVQRGLVGQIIARFETKGCKLVGMKLMSVDQALAEQHYAEHKGKSFFEPTVQYIMSSPVVAMVWEGKNVVALARELMGATNPANANPGSIRGSFGMDISRNVIHGSDSVASAEREIALYFRPEELCDYRKAGEEWLSE.

ATP is bound by residues Lys9, Phe57, Arg85, Thr91, Arg102, and Asn112. The active-site Pros-phosphohistidine intermediate is the His115.

Belongs to the NDK family. Homotetramer. It depends on Mg(2+) as a cofactor.

Its subcellular location is the cytoplasm. It catalyses the reaction a 2'-deoxyribonucleoside 5'-diphosphate + ATP = a 2'-deoxyribonucleoside 5'-triphosphate + ADP. The enzyme catalyses a ribonucleoside 5'-diphosphate + ATP = a ribonucleoside 5'-triphosphate + ADP. Functionally, major role in the synthesis of nucleoside triphosphates other than ATP. The ATP gamma phosphate is transferred to the NDP beta phosphate via a ping-pong mechanism, using a phosphorylated active-site intermediate. The polypeptide is Nucleoside diphosphate kinase (Desulfitobacterium hafniense (strain Y51)).